Here is a 168-residue protein sequence, read N- to C-terminus: Ribosome maturation factor RimM (168 aa).

Residues 92-166 enclose the PRC barrel domain; sequence EDTFYKADLI…RITVDPIEGM (75 aa).

This sequence belongs to the RimM family. Binds ribosomal protein uS19.

The protein resides in the cytoplasm. In terms of biological role, an accessory protein needed during the final step in the assembly of 30S ribosomal subunit, possibly for assembly of the head region. Essential for efficient processing of 16S rRNA. May be needed both before and after RbfA during the maturation of 16S rRNA. It has affinity for free ribosomal 30S subunits but not for 70S ribosomes. This Alkaliphilus metalliredigens (strain QYMF) protein is Ribosome maturation factor RimM.